Reading from the N-terminus, the 1400-residue chain is Alpha-(1-&gt;3)-arabinofuranosyltransferase (1400 aa).

The signal sequence occupies residues 1–30; that stretch reads MAPLSRKWLPVVGAVALALTFAQSPGQVSP. The next 8 helical transmembrane spans lie at 67-87, 91-111, 139-159, 179-199, 215-235, 282-302, 314-334, and 401-421; these read YLFP…PGWV, LWWA…AEAL, ISSE…TILA, VALM…PAVI, AWWL…LTQL, LVTG…GLAG, LVTM…GGLA, and VAVA…AWTG. Positions 700 to 883 constitute an F5/8 type C domain; it reads AEPVVGGWTG…WDLGSELLGR (184 aa). 4 helical membrane-spanning segments follow: residues 1256–1276, 1297–1317, 1338–1358, and 1369–1389; these read LYRA…LLAF, WAAA…GVMV, VTVG…SRHP, and WASV…SVVA.

It is found in the membrane. The catalysed reaction is Adds an alpha-D-arabinofuranosyl group from trans,octacis-decaprenylphospho-beta-D-arabinofuranose at the 3-O-position of an alpha-(1-&gt;5)-arabinofuranan chain attached to a beta-(1-&gt;5)-galactofuranan chain.. The protein operates within cell wall biogenesis; cell wall polysaccharide biosynthesis. Involved in the biosynthesis of the arabinogalactan (AG) region of the mycolylarabinogalactan-peptidoglycan (mAGP) complex, an essential component of the mycobacterial cell wall. Catalyzes the addition of an arabinofuranosyl (Araf) residue from the sugar donor decaprenyl-phospho-arabinose (DPA) on the C-3 of an alpha-(1-&gt;5)-linked Araf from the arabinan backbone of AG. This Mycobacterium tuberculosis (strain ATCC 25618 / H37Rv) protein is Alpha-(1-&gt;3)-arabinofuranosyltransferase (aftD).